A 205-amino-acid polypeptide reads, in one-letter code: MNSKKQDAFQRLIGALKVLPNVGPKSAQRMAYHLLQQKRKEAEELVDALQTALRQVCHCARCNTFCEGGLCDICADETRDGRRLMVVHMPADVSNIEAANCHDGLYFVLMGQINTALGMDVSAIALDRLAQRLDGGEIEEIIIATAFTAEGNATAYVLSEFFKNLPYKVSRLSQGIPLGGELEYVDAGTLAQAVYERRLIKEGGA.

The segment at 59–74 (CARCNTFCEGGLCDIC) adopts a C4-type zinc-finger fold. A Toprim domain is found at 82–177 (RRLMVVHMPA…KVSRLSQGIP (96 aa)).

It belongs to the RecR family.

Its function is as follows. May play a role in DNA repair. It seems to be involved in an RecBC-independent recombinational process of DNA repair. It may act with RecF and RecO. The protein is Recombination protein RecR of Neisseria gonorrhoeae (strain ATCC 700825 / FA 1090).